We begin with the raw amino-acid sequence, 153 residues long: SsrA-binding protein (153 aa).

This sequence belongs to the SmpB family.

It is found in the cytoplasm. Its function is as follows. Required for rescue of stalled ribosomes mediated by trans-translation. Binds to transfer-messenger RNA (tmRNA), required for stable association of tmRNA with ribosomes. tmRNA and SmpB together mimic tRNA shape, replacing the anticodon stem-loop with SmpB. tmRNA is encoded by the ssrA gene; the 2 termini fold to resemble tRNA(Ala) and it encodes a 'tag peptide', a short internal open reading frame. During trans-translation Ala-aminoacylated tmRNA acts like a tRNA, entering the A-site of stalled ribosomes, displacing the stalled mRNA. The ribosome then switches to translate the ORF on the tmRNA; the nascent peptide is terminated with the 'tag peptide' encoded by the tmRNA and targeted for degradation. The ribosome is freed to recommence translation, which seems to be the essential function of trans-translation. In Pelotomaculum thermopropionicum (strain DSM 13744 / JCM 10971 / SI), this protein is SsrA-binding protein.